Reading from the N-terminus, the 351-residue chain is D-alanine--D-alanine ligase (351 aa).

The ATP-grasp domain maps to 135–343 (NQIFLQSGQK…MEEVFSDLIE (209 aa)). Position 167 to 222 (167 to 222 (LETLGFPQFLKPVEGGSSVSVYKITNREQLKEKLALIFESDSKVMSQSFLTGIEVS)) interacts with ATP. Residues Asp298, Glu310, and Asn312 each contribute to the Mg(2+) site.

The protein belongs to the D-alanine--D-alanine ligase family. The cofactor is Mg(2+). Requires Mn(2+) as cofactor.

It is found in the cytoplasm. It carries out the reaction 2 D-alanine + ATP = D-alanyl-D-alanine + ADP + phosphate + H(+). It participates in cell wall biogenesis; peptidoglycan biosynthesis. Functionally, cell wall formation. This chain is D-alanine--D-alanine ligase, found in Leptospira interrogans serogroup Icterohaemorrhagiae serovar copenhageni (strain Fiocruz L1-130).